Consider the following 341-residue polypeptide: Uroporphyrinogen decarboxylase (341 aa).

Substrate is bound by residues 23–27 (RQAGR), D73, Y148, S203, and H318.

It belongs to the uroporphyrinogen decarboxylase family. In terms of assembly, homodimer.

The protein localises to the cytoplasm. The catalysed reaction is uroporphyrinogen III + 4 H(+) = coproporphyrinogen III + 4 CO2. Its pathway is porphyrin-containing compound metabolism; protoporphyrin-IX biosynthesis; coproporphyrinogen-III from 5-aminolevulinate: step 4/4. Functionally, catalyzes the decarboxylation of four acetate groups of uroporphyrinogen-III to yield coproporphyrinogen-III. This Brucella ovis (strain ATCC 25840 / 63/290 / NCTC 10512) protein is Uroporphyrinogen decarboxylase.